Reading from the N-terminus, the 729-residue chain is Isocitrate dehydrogenase [NADP] (729 aa).

Residues Asn-83 and Ser-85 each contribute to the NADP(+) site. The D-threo-isocitrate site is built by Ser-121, Asn-124, Arg-128, Arg-134, and Lys-244. Residue Asn-124 participates in NADP(+) binding. Residue Asp-337 participates in Mg(2+) binding. D-threo-isocitrate is bound by residues Tyr-407 and Arg-534. Asp-535 and Asp-539 together coordinate Mg(2+). NADP(+) contacts are provided by Ser-572, His-576, Arg-587, Asp-589, and Arg-636.

This sequence belongs to the monomeric-type IDH family. As to quaternary structure, monomer. It depends on Mg(2+) as a cofactor. Mn(2+) serves as cofactor.

The catalysed reaction is D-threo-isocitrate + NADP(+) = 2-oxoglutarate + CO2 + NADPH. Its function is as follows. Catalyzes the oxidative decarboxylation of isocitrate to 2-oxoglutarate and carbon dioxide with the concomitant reduction of NADP(+). The chain is Isocitrate dehydrogenase [NADP] from Corynebacterium efficiens (strain DSM 44549 / YS-314 / AJ 12310 / JCM 11189 / NBRC 100395).